Reading from the N-terminus, the 465-residue chain is Fujikurins efflux protein FFUJ_12242 (465 aa).

The tract at residues 1 to 66 is disordered; the sequence is MATNVGGAVD…AAKAHDEGPP (66 aa). Over residues 11-28 the composition is skewed to basic and acidic residues; the sequence is NSRRSISDNRHDPEKPAE. The next 7 membrane-spanning stretches (helical) occupy residues 70 to 90, 115 to 135, 142 to 162, 175 to 195, 200 to 220, 231 to 251, and 274 to 294; these read TAAWMVVLGAWCCSFCSPGWI, WIPSLEIFFLFGLGPIVGIIF, PLIIGGTIFHVFGLMMASLAK, SAIGVACLYSPALACISTWFL, AAMGIMATGSSVGGVIFPIMI, WALRTAAFLILGLQVIACLTV, and PAFALLLAGIFILTYGMYIPI. Asn310 carries N-linked (GlcNAc...) asparagine glycosylation. A run of 5 helical transmembrane segments spans residues 314–334, 342–362, 368–388, 404–424, and 430–450; these read YLVAIMNAASLFGRLGAGYGA, MFIIACGVTGISNLAVWIPAT, IGYAIMFGFASGAFVSLVGAL, IVFLVISIPALTMAPIGGAIL, and GWVSLKVFAGVMCLVGSAIIL.

It belongs to the major facilitator superfamily. Monocarboxylate porter (TC 2.A.1.13) family.

The protein localises to the cell membrane. Efflux pump that may be involved in the secretion of fujikurins. This chain is Fujikurins efflux protein FFUJ_12242, found in Gibberella fujikuroi (strain CBS 195.34 / IMI 58289 / NRRL A-6831) (Bakanae and foot rot disease fungus).